Consider the following 328-residue polypeptide: GTPase Obg (328 aa).

The 159-residue stretch at Tyr-2–Val-160 folds into the Obg domain. The 166-residue stretch at Ala-161–Lys-326 folds into the OBG-type G domain. Residues Gly-167–Ser-174, Phe-192–Ile-196, Asp-213–Gly-216, Asn-280–Asp-283, and Ser-307–Tyr-309 each bind GTP. Mg(2+) contacts are provided by Ser-174 and Thr-194.

It belongs to the TRAFAC class OBG-HflX-like GTPase superfamily. OBG GTPase family. Monomer. Mg(2+) serves as cofactor.

The protein localises to the cytoplasm. In terms of biological role, an essential GTPase which binds GTP, GDP and possibly (p)ppGpp with moderate affinity, with high nucleotide exchange rates and a fairly low GTP hydrolysis rate. Plays a role in control of the cell cycle, stress response, ribosome biogenesis and in those bacteria that undergo differentiation, in morphogenesis control. This is GTPase Obg from Borreliella afzelii (strain PKo) (Borrelia afzelii).